Reading from the N-terminus, the 296-residue chain is 4-hydroxy-tetrahydrodipicolinate synthase (296 aa).

A pyruvate-binding site is contributed by Thr-49. Tyr-137 (proton donor/acceptor) is an active-site residue. Catalysis depends on Lys-166, which acts as the Schiff-base intermediate with substrate. Val-208 is a binding site for pyruvate.

The protein belongs to the DapA family. Homotetramer; dimer of dimers.

The protein resides in the cytoplasm. It catalyses the reaction L-aspartate 4-semialdehyde + pyruvate = (2S,4S)-4-hydroxy-2,3,4,5-tetrahydrodipicolinate + H2O + H(+). Its pathway is amino-acid biosynthesis; L-lysine biosynthesis via DAP pathway; (S)-tetrahydrodipicolinate from L-aspartate: step 3/4. Catalyzes the condensation of (S)-aspartate-beta-semialdehyde [(S)-ASA] and pyruvate to 4-hydroxy-tetrahydrodipicolinate (HTPA). The protein is 4-hydroxy-tetrahydrodipicolinate synthase of Desulforamulus reducens (strain ATCC BAA-1160 / DSM 100696 / MI-1) (Desulfotomaculum reducens).